A 242-amino-acid polypeptide reads, in one-letter code: Endothelial protein C receptor (242 aa).

An N-terminal signal peptide occupies residues 1–17 (MLTKFLPLLLLLLPGCA). Over 18-214 (LCNSDGSQSL…GSQTGRSYTS (197 aa)) the chain is Extracellular. Asn46, Asn63, Asn140, Asn166, and Asn176 each carry an N-linked (GlcNAc...) asparagine glycan. Disulfide bonds link Cys119-Cys190 and Cys223-Cys236. Residues 215 to 235 (LVLGILMGCFIIAGVAVGIFM) traverse the membrane as a helical segment. Over 236-242 (CTSGRRC) the chain is Cytoplasmic.

As to expression, expressed in endothelial cells.

Its subcellular location is the membrane. Binds activated protein C. Enhances protein C activation by the thrombin-thrombomodulin complex; plays a role in the protein C pathway controlling blood coagulation. The chain is Endothelial protein C receptor (Procr) from Mus musculus (Mouse).